Reading from the N-terminus, the 119-residue chain is Fluoride-specific ion channel FluC (119 aa).

The next 4 helical transmembrane spans lie at 5 to 25 (IIPLSIGAALGATARWLLNLA), 30 to 50 (LSPATGNLFANWTGAFLIGIF), 59 to 79 (WKLLLITGFLGSLTTLSGFSL), and 92 to 112 (SALANIFLHTAGSLLLTWLGL). Residues glycine 69 and threonine 72 each contribute to the Na(+) site.

The protein belongs to the fluoride channel Fluc/FEX (TC 1.A.43) family.

Its subcellular location is the cell inner membrane. The catalysed reaction is fluoride(in) = fluoride(out). Na(+) is not transported, but it plays an essential structural role and its presence is essential for fluoride channel function. In terms of biological role, fluoride-specific ion channel. Important for reducing fluoride concentration in the cell, thus reducing its toxicity. In Neisseria meningitidis serogroup A / serotype 4A (strain DSM 15465 / Z2491), this protein is Fluoride-specific ion channel FluC.